A 128-amino-acid polypeptide reads, in one-letter code: Small ribosomal subunit protein uS9c (128 aa).

A disordered region spans residues 106-128 (SRIKERKKYGLKKARKAPQFSKR). The span at 109–128 (KERKKYGLKKARKAPQFSKR) shows a compositional bias: basic residues.

It belongs to the universal ribosomal protein uS9 family.

It localises to the plastid. The protein resides in the chloroplast. This Cyanidium caldarium (Red alga) protein is Small ribosomal subunit protein uS9c (rps9).